A 316-amino-acid polypeptide reads, in one-letter code: Phosphoglycerate mutase-like protein AT74 (316 aa).

H17 (tele-phosphohistidine intermediate) is an active-site residue. The Proton donor/acceptor role is filled by E106. Positions 275–316 are disordered; sequence KECETEATEDREEEEEEEGKRVNLLTSSEYSNEPELYNGQCC. Positions 279–291 are enriched in acidic residues; it reads TEATEDREEEEEE.

The protein belongs to the phosphoglycerate mutase family. As to expression, expressed in roots, leaves, stems, flowers and siliques.

Its function is as follows. Phosphoglycerate mutase-like protein lacking PGM activity. May play a role in carbohydrates metabolism. This is Phosphoglycerate mutase-like protein AT74 from Arabidopsis thaliana (Mouse-ear cress).